A 466-amino-acid polypeptide reads, in one-letter code: Mitochondrial-processing peptidase subunit beta (466 aa).

His73 is a binding site for Zn(2+). Catalysis depends on Glu76, which acts as the Proton acceptor. Residues His77 and Glu153 each coordinate Zn(2+).

Belongs to the peptidase M16 family. As to quaternary structure, heterodimer of mppA (alpha) and mppB (beta) subunits, forming the mitochondrial processing protease (MPP) in which mppA is involved in substrate recognition and binding and mppB is the catalytic subunit. The cofactor is Zn(2+).

The protein localises to the mitochondrion matrix. It carries out the reaction Release of N-terminal transit peptides from precursor proteins imported into the mitochondrion, typically with Arg in position P2.. Its activity is regulated as follows. Binding to mppA is required for catalytic activity. Its function is as follows. Catalytic subunit of the essential mitochondrial processing protease (MPP), which cleaves the mitochondrial sequence off newly imported precursors proteins. Preferentially, cleaves after an arginine at position P2. This is Mitochondrial-processing peptidase subunit beta (mppB) from Lentinula edodes (Shiitake mushroom).